The primary structure comprises 476 residues: Amino acid permease 3 (476 aa).

The Cytoplasmic segment spans residues 1-33 (MVQNHQTVLAVDMPQTGGSKYLDDDGKNKRTGS). A helical transmembrane segment spans residues 34-54 (VWTASAHIITAVIGSGVLSLA). The Extracellular portion of the chain corresponds to 55-57 (WAT). A helical transmembrane segment spans residues 58–78 (AQLGWLAGPVVMLLFSAVTYF). Over 79–122 (TSSLLAACYRSGDPISGKRNYTYMDAVRSNLGGVKVTLCGIVQY) the chain is Cytoplasmic. The chain crosses the membrane as a helical span at residues 123–143 (LNIFGVAIGYTIASAISMMAI). At 144 to 166 (KRSNCFHKSGGKDPCHMNSNPYM) the chain is on the extracellular side. 2 helical membrane passes run 167–187 (IAFG…QLWW) and 188–208 (LSIL…ALGI). Over 209-277 (AQVVVNGKVK…EEKTMKKATL (69 aa)) the chain is Extracellular. A helical transmembrane segment spans residues 278–298 (VSVSVTTMFYMLCGCMGYAAF). Topologically, residues 299 to 300 (GD) are cytoplasmic. A helical membrane pass occupies residues 301-321 (LSPGNLLTGFGFYNPYWLLDI). The Extracellular portion of the chain corresponds to 322-324 (ANA). The chain crosses the membrane as a helical span at residues 325–345 (AIVIHLIGAYQVYCQPLFAFI). Over 346–384 (EKQASIQFPDSEFIAKDIKIPIPGFKPLRLNVFRLIWRT) the chain is Cytoplasmic. 2 consecutive transmembrane segments (helical) span residues 385–405 (VFVI…DVVG) and 406–426 (LLGA…MYIA). Over 427–441 (QKKIPRWSTRWVCLQ) the chain is Cytoplasmic. A helical membrane pass occupies residues 442-462 (VFSLGCLVVSIAAAAGSIAGV). At 463 to 476 (LLDLKSYKPFRSEY) the chain is on the extracellular side.

Belongs to the amino acid/polyamine transporter 2 family. Amino acid/auxin permease (AAAP) (TC 2.A.18.2) subfamily. In terms of tissue distribution, expressed in the root phloem. Detected in stamens, in cotyledons, and in major veins of mature leaves.

The protein localises to the cell membrane. The protein resides in the nucleus membrane. It is found in the endomembrane system. Inhibited by carbonylcyanide m-chlorophenylhydrazone and 2,4-dinitrophenol. Amino acid-proton symporter. Stereospecific transporter with a broad specificity for GABA, tryptophan and both neutral and basic amino acids. High affinity transport of cationic amino acids. This Arabidopsis thaliana (Mouse-ear cress) protein is Amino acid permease 3 (AAP3).